The following is a 141-amino-acid chain: Large ribosomal subunit protein uL16 (141 aa).

The protein belongs to the universal ribosomal protein uL16 family. In terms of assembly, part of the 50S ribosomal subunit.

Binds 23S rRNA and is also seen to make contacts with the A and possibly P site tRNAs. In Sulfurimonas denitrificans (strain ATCC 33889 / DSM 1251) (Thiomicrospira denitrificans (strain ATCC 33889 / DSM 1251)), this protein is Large ribosomal subunit protein uL16.